Reading from the N-terminus, the 277-residue chain is Bleomycin hydrolase (277 aa).

Residue C53 is part of the active site.

This sequence belongs to the peptidase C1 family. In terms of assembly, homohexamer. Interacts with NUDT12 (via ANK repeats).

It is found in the cytoplasm. The protein localises to the cytoplasmic granule. The enzyme catalyses Inactivates bleomycin B2 (a cytotoxic glycometallopeptide) by hydrolysis of a carboxyamide bond of beta-aminoalanine, but also shows general aminopeptidase activity. The specificity varies somewhat with source, but amino acid arylamides of Met, Leu and Ala are preferred.. With respect to regulation, strongly inhibited by leupeptin, puromycin, NEM, and divalent cations. Its function is as follows. The normal physiological role of BLM hydrolase is unknown, but it catalyzes the inactivation of the antitumor drug BLM (a glycopeptide) by hydrolyzing the carboxamide bond of its B-aminoalaninamide moiety thus protecting normal and malignant cells from BLM toxicity. This chain is Bleomycin hydrolase (BLMH), found in Oryctolagus cuniculus (Rabbit).